Here is a 134-residue protein sequence, read N- to C-terminus: ATP synthase epsilon chain (134 aa).

This sequence belongs to the ATPase epsilon chain family. As to quaternary structure, F-type ATPases have 2 components, CF(1) - the catalytic core - and CF(0) - the membrane proton channel. CF(1) has five subunits: alpha(3), beta(3), gamma(1), delta(1), epsilon(1). CF(0) has three main subunits: a, b and c.

The protein localises to the cell membrane. Functionally, produces ATP from ADP in the presence of a proton gradient across the membrane. The chain is ATP synthase epsilon chain from Staphylococcus aureus (strain USA300).